The following is a 359-amino-acid chain: Magnesium transporter NIPA2 (359 aa).

Residues 1–9 (MSLGRGKYD) are Extracellular-facing. A helical membrane pass occupies residues 10–30 (FYIGLGLAMTSSIFIGGSFIL). Residues 31-56 (KKKGLLRLARKGSMRAGQGGHAYLKE) lie on the Cytoplasmic side of the membrane. The helical transmembrane segment at 57 to 77 (WLWWAGLLSMGAGEVANFAAY) threads the bilayer. Position 78 (alanine 78) is a topological domain, extracellular. The chain crosses the membrane as a helical span at residues 79–99 (FAPATLVTPLGALSVLVSAIL). At 100–107 (SSYFLNER) the chain is on the cytoplasmic side. The chain crosses the membrane as a helical span at residues 108–128 (LNLHGKIGCLLSILGSTVMVI). Over 129 to 149 (HAPKEEEIETLNEMSHKLGDP) the chain is Extracellular. The chain crosses the membrane as a helical span at residues 150–170 (GFVVFATFVVIVALIFIFVVG). Over 171–175 (PRHGQ) the chain is Cytoplasmic. The helical transmembrane segment at 176 to 196 (TNILVYITICSVIGAFSVSCV) threads the bilayer. The Extracellular segment spans residues 197–215 (KGLGIAIKELLAGKPVLQH). A helical membrane pass occupies residues 216 to 236 (PLAWILLFSLVVCVSTQINYL). Residues 237–246 (NRALDIFNTS) lie on the Cytoplasmic side of the membrane. The chain crosses the membrane as a helical span at residues 247-267 (IVTPIYYVFFTTSVLTCSAIL). The Extracellular segment spans residues 268–278 (FKEWQDMPVDD). Residues 279-299 (VIGTLSGFFTIIVGIFLLHAF) form a helical membrane-spanning segment. At 300–359 (KDVSFSLASLPVSFRKDEKAMNGNLSSMYEVLNNNEDDLPCGIEHTGENISRRNGNLPSF) the chain is on the cytoplasmic side.

This sequence belongs to the NIPA family. Widely expressed. Expressed at high levels in the kidney.

Its subcellular location is the cell membrane. The protein localises to the early endosome. It carries out the reaction Mg(2+)(in) = Mg(2+)(out). Functionally, acts as a selective Mg(2+) transporter. The chain is Magnesium transporter NIPA2 (Nipa2) from Mus musculus (Mouse).